The sequence spans 64 residues: SPbeta prophage-derived uncharacterized protein YopV (64 aa).

This chain is SPbeta prophage-derived uncharacterized protein YopV (yopV), found in Bacillus subtilis (strain 168).